Here is a 426-residue protein sequence, read N- to C-terminus: Dihydroorotase (426 aa).

Residues histidine 58 and histidine 60 each contribute to the Zn(2+) site. Residues 60 to 62 (HLR) and asparagine 92 each bind substrate. The Zn(2+) site is built by aspartate 150, histidine 177, and histidine 230. Residue asparagine 276 participates in substrate binding. Position 303 (aspartate 303) interacts with Zn(2+). Residue aspartate 303 is part of the active site. Residue histidine 307 participates in substrate binding.

This sequence belongs to the metallo-dependent hydrolases superfamily. DHOase family. Class I DHOase subfamily. Requires Zn(2+) as cofactor.

It catalyses the reaction (S)-dihydroorotate + H2O = N-carbamoyl-L-aspartate + H(+). The protein operates within pyrimidine metabolism; UMP biosynthesis via de novo pathway; (S)-dihydroorotate from bicarbonate: step 3/3. Functionally, catalyzes the reversible cyclization of carbamoyl aspartate to dihydroorotate. This is Dihydroorotase from Acetivibrio thermocellus (strain ATCC 27405 / DSM 1237 / JCM 9322 / NBRC 103400 / NCIMB 10682 / NRRL B-4536 / VPI 7372) (Clostridium thermocellum).